A 275-amino-acid chain; its full sequence is Large ribosomal subunit protein uL2 (275 aa).

Disordered stretches follow at residues 1 to 20 (MAVKKYRPYTPSRRQMTTAD) and 214 to 275 (WLGR…TRRK). A compositionally biased stretch (basic residues) spans 255-275 (KGLKTRRKRKTSDRFIVTRRK).

This sequence belongs to the universal ribosomal protein uL2 family. As to quaternary structure, part of the 50S ribosomal subunit. Forms a bridge to the 30S subunit in the 70S ribosome.

Functionally, one of the primary rRNA binding proteins. Required for association of the 30S and 50S subunits to form the 70S ribosome, for tRNA binding and peptide bond formation. It has been suggested to have peptidyltransferase activity; this is somewhat controversial. Makes several contacts with the 16S rRNA in the 70S ribosome. The chain is Large ribosomal subunit protein uL2 (rplB) from Deinococcus radiodurans (strain ATCC 13939 / DSM 20539 / JCM 16871 / CCUG 27074 / LMG 4051 / NBRC 15346 / NCIMB 9279 / VKM B-1422 / R1).